The following is a 381-amino-acid chain: cAMP-dependent protein kinase type I-alpha regulatory subunit (381 aa).

Residue Met1 is modified to N-acetylmethionine. Residues 1–135 (MESGSTAASE…AALAKAIEKN (135 aa)) form a dimerization and phosphorylation region. A Phosphoserine modification is found at Ser3. The tract at residues 64 to 96 (QIQNLQKAGTRTDSREDEISPPPPNPVVKGRRR) is disordered. The residue at position 75 (Thr75) is a Phosphothreonine. A phosphoserine mark is found at Ser77 and Ser83. Positions 96-100 (RRGAI) match the Pseudophosphorylation motif motif. Ser101 carries the phosphoserine modification. 3',5'-cyclic AMP-binding positions include 137-254 (LFSH…SKVS), Glu202, Arg211, 255-381 (ILES…SLSV), Glu326, and Arg335. The residue at position 258 (Ser258) is a Phosphoserine.

It belongs to the cAMP-dependent kinase regulatory chain family. The inactive holoenzyme is composed of two regulatory chains and two catalytic chains. Activation by cAMP releases the two active catalytic monomers and the regulatory dimer. Interacts with PRKACA and PRKACB. PRKAR1A also interacts with RFC2; the complex may be involved in cell survival. Interacts with AKAP4. Interacts with RARA; the interaction occurs in the presence of cAMP or FSH and regulates RARA transcriptional activity. Interacts with the phosphorylated form of PJA2. Interacts with CBFA2T3. Interacts with PRKX; regulates this cAMP-dependent protein kinase. Interacts with smAKAP; this interaction may target PRKAR1A to the plasma membrane. Interacts with AICDA. Post-translationally, the pseudophosphorylation site binds to the substrate-binding region of the catalytic chain, resulting in the inhibition of its activity.

Its subcellular location is the cell membrane. Functionally, regulatory subunit of the cAMP-dependent protein kinases involved in cAMP signaling in cells. The protein is cAMP-dependent protein kinase type I-alpha regulatory subunit (PRKAR1A) of Pongo abelii (Sumatran orangutan).